A 376-amino-acid chain; its full sequence is MEGGAAGGQRDRETLDAVRSVVFKPSVSLEEKRFPRVQGYDFNRGCDLIGLLDSISSTGFQASNLGDAIDVINQMIDWRLSHDAPTEDCSEEERNLAYRQSVTCKIFLGFTSNLVSSGIREIIRFLVQHRMVEVLVTTAGGIEEDLIKCLAPTYKGDFSLPGSYLRSKGLNRIGNLLVPNDNYCKFEDWIMPILDQMLLEQTTENVVWTPSKVIARLGKEINDESSYLYWAYKNNVSVYCPALTDGSLGDMLYCHSVRNPGLLIDIVQDIRAMNGEAVHVGLRKTGVIILGGGLPKHHICNANMFRNGADYAVYVNTAQEFDGSDSGAEPDEAISWGKIKGSAKTIKVHCDATIAFPLLVAATFARKFQERNNKLA.

NAD(+) contacts are provided by residues 112–116 (SNLVS), 138–140 (TAG), E144, and D245. 143–144 (EE) contributes to the spermidine binding site. Residue D250 participates in spermidine binding. G292 provides a ligand contact to NAD(+). A spermidine-binding site is contributed by H297. An NAD(+)-binding site is contributed by 317–318 (TA). Spermidine is bound by residues 323–325 (GSD) and 332–338 (EAISWGK). K338 functions as the Nucleophile in the catalytic mechanism. Position 351–352 (351–352 (DA)) interacts with NAD(+).

This sequence belongs to the deoxyhypusine synthase family. NAD(+) serves as cofactor.

It catalyses the reaction [eIF5A protein]-L-lysine + spermidine = [eIF5A protein]-deoxyhypusine + propane-1,3-diamine. It participates in protein modification; eIF5A hypusination. Functionally, catalyzes the NAD-dependent oxidative cleavage of spermidine and the subsequent transfer of the butylamine moiety of spermidine to the epsilon-amino group of a specific lysine residue of the eIF-5A precursor protein to form the intermediate deoxyhypusine residue. Also able to produce homospermidine from putrescine. This is Deoxyhypusine synthase (DHS) from Musa acuminata (Banana).